The following is a 135-amino-acid chain: RuBisCO chaperone RbcX (135 aa).

Residues 103-135 are disordered; sequence QHLERMTQVSLSHPSPESEQQQFSDPDWDNLAS. Residues 109 to 126 are compositionally biased toward polar residues; the sequence is TQVSLSHPSPESEQQQFS.

The protein belongs to the RbcX family. As to quaternary structure, homodimer. Interacts with the exposed C-terminal peptide of RbcL ('Glu-459-Asp-468'); binds 1 RbcL peptide per homodimer. Contacts a second RbcL monomer via its peripheral polar surface. A slightly longer RbcL peptide binds to RbcX2 with a higher affinity.

The protein resides in the carboxysome. Its subcellular location is the cytoplasm. In terms of biological role, an RbcL-specific chaperone. The central cleft of the RbcX homodimer (RbcX2) binds the C-terminus of an RbcL monomer, stabilizing the C-terminus and probably preventing its reassociation with chaperonin GroEL-ES. At the same time the peripheral region of RbcX2 binds a second RbcL monomer, bridging the RbcL homodimers in the correct orientation. The RbcX2(2)-bound RbcL dimers then assemble into the RbcL8 core (RbcL8-(RbcX2)8). RbcS binding triggers the release of RbcX2. Its function is as follows. Required for optimal reconstitution of RuBisCO upon expression of rbcL-rbcS subunits in E.coli. The protein is RuBisCO chaperone RbcX of Anabaena sp. (strain CA / ATCC 33047).